Here is a 197-residue protein sequence, read N- to C-terminus: Pyridoxal 5'-phosphate synthase subunit PdxT (197 aa).

Residue 52 to 54 (GES) participates in L-glutamine binding. Cysteine 84 serves as the catalytic Nucleophile. L-glutamine is bound by residues arginine 116 and 143 to 144 (IR). Active-site charge relay system residues include histidine 179 and glutamate 181.

The protein belongs to the glutaminase PdxT/SNO family. As to quaternary structure, in the presence of PdxS, forms a dodecamer of heterodimers. Only shows activity in the heterodimer.

It catalyses the reaction aldehydo-D-ribose 5-phosphate + D-glyceraldehyde 3-phosphate + L-glutamine = pyridoxal 5'-phosphate + L-glutamate + phosphate + 3 H2O + H(+). The catalysed reaction is L-glutamine + H2O = L-glutamate + NH4(+). It functions in the pathway cofactor biosynthesis; pyridoxal 5'-phosphate biosynthesis. Functionally, catalyzes the hydrolysis of glutamine to glutamate and ammonia as part of the biosynthesis of pyridoxal 5'-phosphate. The resulting ammonia molecule is channeled to the active site of PdxS. In Ignicoccus hospitalis (strain KIN4/I / DSM 18386 / JCM 14125), this protein is Pyridoxal 5'-phosphate synthase subunit PdxT.